The following is a 398-amino-acid chain: Tryptophan synthase beta chain (398 aa).

An N6-(pyridoxal phosphate)lysine modification is found at lysine 88.

Belongs to the TrpB family. As to quaternary structure, tetramer of two alpha and two beta chains. Pyridoxal 5'-phosphate serves as cofactor.

The catalysed reaction is (1S,2R)-1-C-(indol-3-yl)glycerol 3-phosphate + L-serine = D-glyceraldehyde 3-phosphate + L-tryptophan + H2O. It functions in the pathway amino-acid biosynthesis; L-tryptophan biosynthesis; L-tryptophan from chorismate: step 5/5. The beta subunit is responsible for the synthesis of L-tryptophan from indole and L-serine. This is Tryptophan synthase beta chain from Actinobacillus succinogenes (strain ATCC 55618 / DSM 22257 / CCUG 43843 / 130Z).